A 252-amino-acid polypeptide reads, in one-letter code: Cell division protein ZapD (252 aa).

It belongs to the ZapD family. In terms of assembly, interacts with FtsZ.

It localises to the cytoplasm. In terms of biological role, cell division factor that enhances FtsZ-ring assembly. Directly interacts with FtsZ and promotes bundling of FtsZ protofilaments, with a reduction in FtsZ GTPase activity. In Chromobacterium violaceum (strain ATCC 12472 / DSM 30191 / JCM 1249 / CCUG 213 / NBRC 12614 / NCIMB 9131 / NCTC 9757 / MK), this protein is Cell division protein ZapD.